The sequence spans 349 residues: Protein Wnt-7b (349 aa).

The signal sequence occupies residues 1-24 (MHRNFRKWIFYVFLCFGVIYVKLG). 5 disulfide bridges follow: Cys-73/Cys-84, Cys-123/Cys-131, Cys-133/Cys-152, Cys-200/Cys-214, and Cys-202/Cys-209. 2 N-linked (GlcNAc...) asparagine glycosylation sites follow: Asn-83 and Asn-127. A lipid anchor (O-palmitoleoyl serine; by PORCN) is attached at Ser-206. The disordered linker stretch occupies residues 238–266 (VEVVRASRLRQPTFLKIKQIKSYQKPMET). 6 disulfide bridges follow: Cys-278-Cys-309, Cys-294-Cys-304, Cys-308-Cys-348, Cys-324-Cys-339, Cys-326-Cys-336, and Cys-331-Cys-332. A glycan (N-linked (GlcNAc...) asparagine) is linked at Asn-295.

The protein belongs to the Wnt family. Palmitoleoylation is required for efficient binding to frizzled receptors. Depalmitoleoylation leads to Wnt signaling pathway inhibition. In terms of tissue distribution, expressed in differentiating lens fiber cells.

It localises to the secreted. It is found in the extracellular space. The protein localises to the extracellular matrix. Functionally, ligand for members of the frizzled family of seven transmembrane receptors that functions in the canonical Wnt/beta-catenin signaling pathway. Required for normal fusion of the chorion and the allantois during placenta development. Required for central nervous system (CNS) angiogenesis and blood-brain barrier regulation. The sequence is that of Protein Wnt-7b (WNT7B) from Gallus gallus (Chicken).